Here is a 312-residue protein sequence, read N- to C-terminus: Ribosomal RNA small subunit methyltransferase H (312 aa).

Residues 32-34 (AGH), Asp51, Phe78, Asp99, and Gln106 each bind S-adenosyl-L-methionine.

This sequence belongs to the methyltransferase superfamily. RsmH family.

The protein resides in the cytoplasm. It catalyses the reaction cytidine(1402) in 16S rRNA + S-adenosyl-L-methionine = N(4)-methylcytidine(1402) in 16S rRNA + S-adenosyl-L-homocysteine + H(+). Its function is as follows. Specifically methylates the N4 position of cytidine in position 1402 (C1402) of 16S rRNA. This is Ribosomal RNA small subunit methyltransferase H from Exiguobacterium sibiricum (strain DSM 17290 / CCUG 55495 / CIP 109462 / JCM 13490 / 255-15).